We begin with the raw amino-acid sequence, 197 residues long: Adenylyl-sulfate kinase (197 aa).

33–40 (GLSGSGKS) is an ATP binding site. S107 functions as the Phosphoserine intermediate in the catalytic mechanism.

Belongs to the APS kinase family.

It carries out the reaction adenosine 5'-phosphosulfate + ATP = 3'-phosphoadenylyl sulfate + ADP + H(+). The protein operates within sulfur metabolism; hydrogen sulfide biosynthesis; sulfite from sulfate: step 2/3. Catalyzes the synthesis of activated sulfate. In Bacillus velezensis (strain DSM 23117 / BGSC 10A6 / LMG 26770 / FZB42) (Bacillus amyloliquefaciens subsp. plantarum), this protein is Adenylyl-sulfate kinase.